The following is a 210-amino-acid chain: Stress-response A/B barrel domain-containing protein DABB1 (210 aa).

2 consecutive Stress-response A/B barrel domains span residues 5-100 (VEHV…AVDW) and 116-204 (IGKI…VVEF).

As to quaternary structure, homodimer.

The protein resides in the cytoplasm. It is found in the cytosol. Involved in defense against fungal pathogens. Possesses antifungal activity against diverse pathogenic fungi. This Arabidopsis thaliana (Mouse-ear cress) protein is Stress-response A/B barrel domain-containing protein DABB1.